Here is a 322-residue protein sequence, read N- to C-terminus: Transcription factor Atoh8 (322 aa).

Disordered regions lie at residues 77–96, 101–144, and 159–221; these read PVPA…DTAR, IRAP…EAHS, and PPAR…ATAA. A compositionally biased stretch (basic and acidic residues) spans 101-111; that stretch reads IRAPEVSDARK. Residues 231-244 form a basic motif; degenerate region; sequence TRRLLANARERTRV. A bHLH domain is found at 231 to 283; the sequence is TRRLLANARERTRVHTISAAFEALRKQVPCYSYGQKLSKLAILRIACNYILSL. The segment at 245–283 is helix-loop-helix motif; sequence HTISAAFEALRKQVPCYSYGQKLSKLAILRIACNYILSL.

As to quaternary structure, efficient DNA binding requires dimerization with another bHLH protein. Interacts with NEUROG3 and NEUROD1. Interacts with ZFPM2; mediates indirect interaction with GATA4. Forms a heterodimer with TCF3; repress transcription of TCF3 and TCF3/NEUROG3 dimer-induced transactivation of E box-dependent promoters. Expressed by subsets of mature neurons. Expressed in kidney (podocytes). Expression is restricted to the atria, lung mesenchyme, and vascular smooth muscle.

Its subcellular location is the nucleus. The protein localises to the nucleus speckle. It localises to the cytoplasm. Transcription factor that binds a palindromic (canonical) core consensus DNA sequence 5'-CANNTG- 3' known as an E-box element, possibly as a heterodimer with other bHLH proteins. Regulates endothelial cell proliferation, migration and tube-like structures formation. Modulates endothelial cell differentiation through NOS3. May be implicated in specification and differentiation of neuronal cell lineages in the brain. May participate in kidney development and may be involved in podocyte differentiation. During early embryonic development is involved in tissue-specific differentiation processes that are dependent on class II bHLH factors and namely modulates the differentiation program initiated by the pro-endocrine factor NEUROG3. During myogenesis, may play a role during the transition of myoblasts from the proliferative phase to the differentiation phase. Positively regulates HAMP transcription in two ways, firstly by acting directly on the HAMP promoter via E-boxes binding and indirectly through increased phosphorylation of SMAD protein complex. Repress NEUROG3-dependent gene activation in a gene-specific manner through at least two mechanisms; requires only either the sequestering of a general partner such as TCF3 through heterodimerization, either also requires binding of the bHLH domain to DNA via a basic motif. This Mus musculus (Mouse) protein is Transcription factor Atoh8.